The primary structure comprises 67 residues: Large ribosomal subunit protein bL31 (67 aa).

Residues C16, C18, C36, and C39 each contribute to the Zn(2+) site.

Belongs to the bacterial ribosomal protein bL31 family. Type A subfamily. Part of the 50S ribosomal subunit. The cofactor is Zn(2+).

Binds the 23S rRNA. The sequence is that of Large ribosomal subunit protein bL31 from Treponema pallidum (strain Nichols).